Reading from the N-terminus, the 185-residue chain is Transcription termination/antitermination protein NusG (185 aa).

In terms of domain architecture, KOW spans 133–161 (PGEEVRVTEGPFADFNGTVEEVDYEKGRL).

Belongs to the NusG family.

Functionally, participates in transcription elongation, termination and antitermination. In Haemophilus influenzae (strain ATCC 51907 / DSM 11121 / KW20 / Rd), this protein is Transcription termination/antitermination protein NusG.